The following is a 621-amino-acid chain: Rab proteins geranylgeranyltransferase component A 2 (621 aa).

The disordered stretch occupies residues 113–171; it reads VQDTETLQRSSPLEASATPADSLDSASLPKERQSAYSTSYEVPSRHTEESDRELSLPSA. A compositionally biased stretch (polar residues) spans 115–125; it reads DTETLQRSSPL. The segment covering 155–166 has biased composition (basic and acidic residues); the sequence is PSRHTEESDREL.

It belongs to the Rab GDI family. Monomer. Heterotrimer composed of RABGGTA, RABGGTB and CHML; within this trimer, RABGGTA and RABGGTB form the catalytic component B, while CHML (component A) mediates Rab protein binding. Interacts with RAB1A, RAB7A and RAB27A, but has much lower affinity for RAB1A, RAB7A and RAB27A than CHM. Interacts with the non-phosphorylated forms of RAB3A, RAB3B, RAB3C, RAB3D, RAB5B, RAB5C, RAB8A, RAB8B, RAB10, RAB12, RAB35, and RAB43.

The protein resides in the cytoplasm. It localises to the cytosol. Functionally, substrate-binding subunit (component A) of the Rab geranylgeranyltransferase (GGTase) complex. Binds unprenylated Rab proteins and presents the substrate peptide to the catalytic component B. The component A is thought to be regenerated by transferring its prenylated Rab back to the donor membrane. Less effective than CHM in supporting prenylation of Rab3 family. This chain is Rab proteins geranylgeranyltransferase component A 2 (Chml), found in Mus musculus (Mouse).